The chain runs to 418 residues: Putative ion-transport protein YfeO (418 aa).

Helical transmembrane passes span 10-30, 54-74, 99-119, 120-140, 149-169, 186-206, 223-243, 258-278, 300-320, 322-342, 343-363, and 371-391; these read LLLSLPAVAIGIASSLILIVV, DSPIWIIGVLTLTGIAVGLVI, ALPGLIVALILGLAGGVSLGP, EHPIMTVNIALAVAIGARLLP, ILASAGTIGALFGTPVAAALI, LFAPLMAAAAGALTTGLFFHP, ILSGAIVAAIAIAAGMVAVWC, VLVLGIGGFILGILGVIGGPV, DYFLLAVIKLAALVVAAASGF, GGRIFPAVFVGVALGLMLHEH, VPAVPAAITVSCAILGIVLVV, and LFMAAVVVPNTTLLPLLCIVM.

Belongs to the chloride channel (TC 2.A.49) family.

The protein localises to the cell membrane. The polypeptide is Putative ion-transport protein YfeO (Shigella sonnei (strain Ss046)).